Reading from the N-terminus, the 81-residue chain is Antimicrobial peptide D1 (81 aa).

The N-terminal stretch at 1–31 (MAKTVLGIHVTFLTLLFAVLLLNDVMYTPVE) is a signal peptide. Cystine bridges form between C34/C81, C45/C66, C51/C75, and C55/C77.

Antimicrobial peptide probably active against fungi like B.sorokiniana, F.oxysporum, F.graminearum, F.avenaceum, B.cinerea, P.beta, P.infestans and P.debaryanum. The protein is Antimicrobial peptide D1 of Stellaria media (Common chickweed).